We begin with the raw amino-acid sequence, 460 residues long: MTLRIFDTGTRTLRDFKPVQPGHASVYLCGATPQSSPHIGHVRSAVAFDILRRWLMAKGLDVAFVRNVTDIDDKILTKASENGRPWWEWVSTYEREFTWTYNTLGVLPPSTEPRATGHVTQMIKYMQRLIDNGFAYAVDGSVYFDVAAWSKAEGSDYGSLSGNRVEDMEQGEPDNFGKRGPQDFALWKAAKPGEPSWPTPWGDGRPGWHLECSAMATYYLGEQFDIHCGGLDLQFPHHENEIAQAHAAGDKFANYWMHNHWVTMAGEKMSKSLGNVLAVPEMLKQVRPVELRYYLGSAHYRSVLEYSESALSEAAVGYRRIESFLERVGDVEVGEWTPGFEVAMDEDIAVPKALAEIHNAVREGNAALDKGDREAAEKLASSVRAMTGVLGFDPVEWGSDAGADGKADKALDVLISSELERRATARAEKNWAVADEVRDRLADAGIEVVDTADGATWKLQ.

Cys-29 serves as a coordination point for Zn(2+). Positions 31-41 match the 'HIGH' region motif; that stretch reads ATPQSSPHIGH. Zn(2+)-binding residues include Cys-212, His-237, and Glu-241. The 'KMSKS' region motif lies at 268 to 272; the sequence is KMSKS. Lys-271 is a binding site for ATP.

This sequence belongs to the class-I aminoacyl-tRNA synthetase family. In terms of assembly, monomer. Zn(2+) serves as cofactor.

It is found in the cytoplasm. The catalysed reaction is tRNA(Cys) + L-cysteine + ATP = L-cysteinyl-tRNA(Cys) + AMP + diphosphate. This chain is Cysteine--tRNA ligase, found in Corynebacterium glutamicum (strain ATCC 13032 / DSM 20300 / JCM 1318 / BCRC 11384 / CCUG 27702 / LMG 3730 / NBRC 12168 / NCIMB 10025 / NRRL B-2784 / 534).